Reading from the N-terminus, the 384-residue chain is S-adenosylmethionine synthase (384 aa).

Histidine 15 contacts ATP. Residue aspartate 17 coordinates Mg(2+). Residue glutamate 43 participates in K(+) binding. L-methionine contacts are provided by glutamate 56 and glutamine 99. A flexible loop region spans residues 99-109 (QSPDINQGVDR). Residues 164–166 (DAK), 230–231 (RF), aspartate 239, 245–246 (RK), alanine 262, and lysine 266 each bind ATP. An L-methionine-binding site is contributed by aspartate 239. Lysine 270 is a binding site for L-methionine.

The protein belongs to the AdoMet synthase family. In terms of assembly, homotetramer; dimer of dimers. It depends on Mg(2+) as a cofactor. K(+) is required as a cofactor.

The protein resides in the cytoplasm. It carries out the reaction L-methionine + ATP + H2O = S-adenosyl-L-methionine + phosphate + diphosphate. Its pathway is amino-acid biosynthesis; S-adenosyl-L-methionine biosynthesis; S-adenosyl-L-methionine from L-methionine: step 1/1. Functionally, catalyzes the formation of S-adenosylmethionine (AdoMet) from methionine and ATP. The overall synthetic reaction is composed of two sequential steps, AdoMet formation and the subsequent tripolyphosphate hydrolysis which occurs prior to release of AdoMet from the enzyme. The polypeptide is S-adenosylmethionine synthase (Salmonella heidelberg (strain SL476)).